The following is a 298-amino-acid chain: Bifunctional protein FolD (298 aa).

Residues 165–167 (GRG), serine 194, and isoleucine 235 contribute to the NADP(+) site.

This sequence belongs to the tetrahydrofolate dehydrogenase/cyclohydrolase family. As to quaternary structure, homodimer.

The catalysed reaction is (6R)-5,10-methylene-5,6,7,8-tetrahydrofolate + NADP(+) = (6R)-5,10-methenyltetrahydrofolate + NADPH. It catalyses the reaction (6R)-5,10-methenyltetrahydrofolate + H2O = (6R)-10-formyltetrahydrofolate + H(+). Its pathway is one-carbon metabolism; tetrahydrofolate interconversion. In terms of biological role, catalyzes the oxidation of 5,10-methylenetetrahydrofolate to 5,10-methenyltetrahydrofolate and then the hydrolysis of 5,10-methenyltetrahydrofolate to 10-formyltetrahydrofolate. This chain is Bifunctional protein FolD, found in Amoebophilus asiaticus (strain 5a2).